Here is a 218-residue protein sequence, read N- to C-terminus: Small ribosomal subunit protein uS3c (218 aa).

The KH type-2 domain occupies 47–118 (VQKNIRISSG…KLNIAITRIT (72 aa)).

Belongs to the universal ribosomal protein uS3 family. Part of the 30S ribosomal subunit.

The protein localises to the plastid. Its subcellular location is the chloroplast. The sequence is that of Small ribosomal subunit protein uS3c (rps3) from Vitis vinifera (Grape).